The following is a 386-amino-acid chain: 3-ketosteroid-9-alpha-monooxygenase, oxygenase component (386 aa).

In terms of domain architecture, Rieske spans 26 to 128 (WHCLGVAKDY…TDVRSGLLFV (103 aa)). Positions 67, 69, 86, and 89 each coordinate [2Fe-2S] cluster. Positions 175, 181, 186, and 304 each coordinate Fe cation.

As to quaternary structure, homotrimer. The two-component system 3-ketosteroid-9-alpha-monooxygenase is composed of an oxygenase component KshA and a reductase component KshB. It depends on [2Fe-2S] cluster as a cofactor. Fe cation is required as a cofactor.

It catalyses the reaction androsta-1,4-diene-3,17-dione + 2 reduced [2Fe-2S]-[ferredoxin] + O2 + 2 H(+) = 9alpha-hydroxyandrosta-1,4-diene-3,17-dione + 2 oxidized [2Fe-2S]-[ferredoxin] + H2O. The enzyme catalyses androst-4-ene-3,17-dione + NADH + O2 + H(+) = 9alpha-hydroxy-androst-4-ene-3,17-dione + NAD(+) + H2O. It carries out the reaction 3-oxochol-4-en-22-oate + NADH + O2 + H(+) = 9alpha-hydroxy-3-oxochol-4-en-22-oate + NAD(+) + H2O. The catalysed reaction is 3-oxochola-1,4-dien-22-oate + NADH + O2 + H(+) = 9alpha-hydroxy-3-oxochola-1,4-dien-22-oate + NAD(+) + H2O. It catalyses the reaction 3-oxochol-4-en-22-oyl-CoA + NADH + O2 + H(+) = 9alpha-hydroxy-3-oxochol-4-en-22-oyl-CoA + NAD(+) + H2O. The enzyme catalyses 3-oxochola-1,4-dien-22-oyl-CoA + NADH + O2 + H(+) = 9alpha-hydroxy-3-oxochola-1,4-dien-22-oyl-CoA + NAD(+) + H2O. Its pathway is lipid metabolism; steroid biosynthesis. Its function is as follows. Involved in the degradation of cholesterol. Catalyzes the introduction of a 9a-hydroxyl moiety into 1,4-androstadiene-3,17-dione (ADD) to yield the 9alpha-hydroxy-1,4-androstadiene-3,17-dione (9OHADD) intermediate which spontaneously form 3-hydroxy-9,10-seconandrost-1,3,5(10)-triene-9,17-dione (HSA) via the meta-cleavage of ring B with concomitant aromatization of ring A. KSH is also able to use 4-androstene-3,17-dione (AD), 3-oxo-23,24-bisnorcholesta-4-en-22-oate (4-BNC), 3-oxo-23,24-bisnorcholesta-1,4-dien-22-oate (1,4-BNC), 3-oxo-23,24-bisnorcholesta-4-en-22-oyl-coenzyme A thioester (4-BNC-CoA) and 3-oxo-23,24-bisnorcholesta-1,4-dien-22-oyl-coenzyme A thioester (1,4-BNC-CoA) as substrates. The protein is 3-ketosteroid-9-alpha-monooxygenase, oxygenase component (kshA) of Mycobacterium tuberculosis (strain ATCC 25618 / H37Rv).